The sequence spans 227 residues: Thiocyanate methyltransferase 1 (227 aa).

The S-adenosyl-L-methionine site is built by W36, W40, W47, and G74. S86 is modified (phosphoserine). Residues D95, 123-124 (DV), and Y139 each bind S-adenosyl-L-methionine.

It belongs to the class I-like SAM-binding methyltransferase superfamily. TPMT family. As to expression, expressed in shoots, leaves, stems, inflorescences, flowers and green siliques.

The catalysed reaction is thiocyanate + S-adenosyl-L-methionine = methyl thiocyanate + S-adenosyl-L-homocysteine. Functionally, S-adenosyl-L-methionine-dependent methyltransferase. Involved in glucosinolate metabolism and defense against phytopathogens. Highly reactive to thiocyanate (NCS(-)) derived from myrosinase-mediated hydrolysis of glucosinolates upon tissue damage. The sequence is that of Thiocyanate methyltransferase 1 from Arabidopsis thaliana (Mouse-ear cress).